Here is a 378-residue protein sequence, read N- to C-terminus: Spermidine/putrescine import ATP-binding protein PotA (378 aa).

Residues 18–248 (VQLAGIRKCF…PKNLFVAGFI (231 aa)) form the ABC transporter domain. 50 to 57 (GPSGCGKT) lines the ATP pocket.

This sequence belongs to the ABC transporter superfamily. Spermidine/putrescine importer (TC 3.A.1.11.1) family. In terms of assembly, the complex is composed of two ATP-binding proteins (PotA), two transmembrane proteins (PotB and PotC) and a solute-binding protein (PotD).

The protein resides in the cell inner membrane. The catalysed reaction is ATP + H2O + polyamine-[polyamine-binding protein]Side 1 = ADP + phosphate + polyamineSide 2 + [polyamine-binding protein]Side 1.. In terms of biological role, part of the ABC transporter complex PotABCD involved in spermidine/putrescine import. Responsible for energy coupling to the transport system. The chain is Spermidine/putrescine import ATP-binding protein PotA from Shigella dysenteriae serotype 1 (strain Sd197).